We begin with the raw amino-acid sequence, 246 residues long: Envelope glycoprotein gp95 (246 aa).

The Extracellular portion of the chain corresponds to 1-192 (IPSRPVGGPC…EWAVHLLKGL (192 aa)). Asn31 carries N-linked (GlcNAc...) asparagine; by host glycosylation. Cysteines 50 and 86 form a disulfide. The segment at 58 to 78 (GPTARIFASILAPGVAAAQAL) is fusion peptide. Residues 75-125 (AQALKEIERLACWSVKQANLTTSLLGDLLDDVTSIRHAVLQNRAAIDFLLL) are a coiled coil. Residue Asn93 is glycosylated (N-linked (GlcNAc...) asparagine; by host). Residues 114–130 (LQNRAAIDFLLLAHGHG) are immunosuppression. Cys131 and Cys138 are joined by a disulfide. An N-linked (GlcNAc...) asparagine; by host glycan is attached at Asn141. A coiled-coil region spans residues 143–173 (SDHSESIQKKFQLMKEHVNKIGVDSDPIGSW). Residues 193 to 213 (LLGLVVILLLVVCLPCLLQIV) form a helical membrane-spanning segment. Residues Cys205 and Cys208 are each lipidated (S-palmitoyl cysteine; by host). Topologically, residues 214–246 (CGNIRKMINNSISYHTEYKKLQKAYGQPESRIV) are cytoplasmic.

Belongs to the Alpharetroviruses envelope glycoprotein family. In terms of assembly, heterodimer with the transmembrane protein. The mature envelope protein (Env) consists of a trimer of SU-TM heterodimers attached by a labile interchain disulfide bond. Heterodimer with the surface protein. The mature envelope protein (Env) consists of a trimer of SU-TM heterodimers attached by a labile interchain disulfide bond. Post-translationally, specific enzymatic cleavages in vivo yield mature proteins. Envelope glycoproteins are synthesized as an inactive precursor that is N-glycosylated and processed likely by host cell furin or by a furin-like protease in the Golgi to yield the mature SU and TM proteins. The cleavage site between SU and TM requires the minimal sequence [KR]-X-[KR]-R. The transmembrane protein is palmitoylated. Palmitoylation is necessary for glycoprotein function and infectivity.

The protein localises to the virion membrane. The protein resides in the host cell membrane. Its function is as follows. The surface protein (SU) attaches the virus to the host cell by binding to its receptor. This interaction triggers the refolding of the transmembrane protein (TM) thereby unmasking its fusion peptide and the formation of a reactive thiolate to activate its fusogenic potential. Fusion occurs at the host cell plasma membrane. Functionally, the transmembrane protein (TM) acts as a class I viral fusion protein. Under the current model, the protein has at least 3 conformational states: pre-fusion native state, pre-hairpin intermediate state, and post-fusion hairpin state. During viral and target cell membrane fusion, the coiled coil regions (heptad repeats) assume a trimer-of-hairpins structure, positioning the fusion peptide in close proximity to the C-terminal region of the ectodomain. The formation of this structure appears to drive apposition and subsequent fusion of viral and target cell membranes. Membranes fusion leads to delivery of the nucleocapsid into the cytoplasm. This is Envelope glycoprotein gp95 (env) from Galliformes.